Reading from the N-terminus, the 84-residue chain is Small ribosomal subunit protein uS15 (84 aa).

This sequence belongs to the universal ribosomal protein uS15 family. Part of the 30S ribosomal subunit. Forms a bridge to the 50S subunit in the 70S ribosome, contacting the 23S rRNA.

One of the primary rRNA binding proteins, it binds directly to 16S rRNA where it helps nucleate assembly of the platform of the 30S subunit by binding and bridging several RNA helices of the 16S rRNA. Functionally, forms an intersubunit bridge (bridge B4) with the 23S rRNA of the 50S subunit in the ribosome. In Akkermansia muciniphila (strain ATCC BAA-835 / DSM 22959 / JCM 33894 / BCRC 81048 / CCUG 64013 / CIP 107961 / Muc), this protein is Small ribosomal subunit protein uS15.